Here is a 225-residue protein sequence, read N- to C-terminus: Cyanamide hydratase DDI2 (225 aa).

The 111-residue stretch at 52-162 folds into the HD domain; that stretch reads VLNHSLRVFQ…LQIATTLDNV (111 aa).

This sequence belongs to the cyanamide dehydrase family. As to quaternary structure, homohexamer. It depends on Zn(2+) as a cofactor.

The catalysed reaction is urea = cyanamide + H2O. Functionally, cyanamide hydratase involved in the detoxification and/or utilization of cyanamide, a toxic nitrile compound distributed widely in the environment. The polypeptide is Cyanamide hydratase DDI2 (Saccharomyces cerevisiae (strain ATCC 204508 / S288c) (Baker's yeast)).